Reading from the N-terminus, the 142-residue chain is Prefoldin subunit alpha 2 (142 aa).

The protein belongs to the prefoldin subunit alpha family. In terms of assembly, heterohexamer of two alpha and four beta subunits.

The protein localises to the cytoplasm. Functionally, molecular chaperone capable of stabilizing a range of proteins. Seems to fulfill an ATP-independent, HSP70-like function in archaeal de novo protein folding. The polypeptide is Prefoldin subunit alpha 2 (Thermococcus kodakarensis (strain ATCC BAA-918 / JCM 12380 / KOD1) (Pyrococcus kodakaraensis (strain KOD1))).